The sequence spans 465 residues: Putative F-box/FBD/LRR-repeat protein At1g22000 (465 aa).

Residues 28–74 (ETRICALPDDLLLQILPHVPTKEAVATSILSKQWRYVWLMLPKLEFK) enclose the F-box domain. LRR repeat units follow at residues 154–181 (CLTL…SLHY), 182–207 (VVYK…SVHS), 210–230 (DDNL…NYDE), 248–273 (NEVE…HLSE), and 339–365 (ISLV…TIDN). In terms of domain architecture, FBD spans 373 to 424 (SWNQPSSIPGCLLSHLETFRWRGYGGREDAKKLLMTYILANSKCLKTVEISL).

In Arabidopsis thaliana (Mouse-ear cress), this protein is Putative F-box/FBD/LRR-repeat protein At1g22000.